The following is a 720-amino-acid chain: Dedicator of cytokinesis protein 9 (720 aa).

Residues 186-638 (KSYASTPELR…LSDIIVPRIC (453 aa)) form the DOCKER domain. Residues 277–638 (DEEASMMEDV…LSDIIVPRIC (362 aa)) form an interaction with CDC42 region.

This sequence belongs to the DOCK family. In terms of assembly, homodimer. Interacts preferentially with nucleotide-depleted CDC42.

Its subcellular location is the endomembrane system. Guanine nucleotide-exchange factor (GEF) that activates CDC42 by exchanging bound GDP for free GTP. Overexpression induces filopodia formation. The polypeptide is Dedicator of cytokinesis protein 9 (Dock9) (Rattus norvegicus (Rat)).